We begin with the raw amino-acid sequence, 37 residues long: Large ribosomal subunit protein bL36c (37 aa).

This sequence belongs to the bacterial ribosomal protein bL36 family.

It localises to the plastid. The protein resides in the chloroplast. The protein is Large ribosomal subunit protein bL36c of Lactuca sativa (Garden lettuce).